The primary structure comprises 166 residues: Regulatory protein RecX (166 aa).

This sequence belongs to the RecX family.

The protein localises to the cytoplasm. In terms of biological role, modulates RecA activity. The chain is Regulatory protein RecX from Salmonella choleraesuis (strain SC-B67).